The following is a 155-amino-acid chain: Large ribosomal subunit protein uL15 (155 aa).

Basic and acidic residues predominate over residues 1–13 (MKLNELRDAEGAT). A disordered region spans residues 1–41 (MKLNELRDAEGATKARKRVGRGIGSGSGKTGGRGVKGQKSR). Residues 21–35 (RGIGSGSGKTGGRGV) show a composition bias toward gly residues.

This sequence belongs to the universal ribosomal protein uL15 family. In terms of assembly, part of the 50S ribosomal subunit.

Functionally, binds to the 23S rRNA. The protein is Large ribosomal subunit protein uL15 of Chelativorans sp. (strain BNC1).